A 181-amino-acid polypeptide reads, in one-letter code: Large ribosomal subunit protein eL18 (181 aa).

Positions 152 to 181 (WGKAPGQRGSHSAPYVRSEGRKFERAHGLK) are disordered. Residues 169-181 (SEGRKFERAHGLK) show a composition bias toward basic and acidic residues.

It belongs to the eukaryotic ribosomal protein eL18 family.

Its subcellular location is the cytoplasm. This chain is Large ribosomal subunit protein eL18 (RPL18), found in Tetrahymena thermophila.